A 323-amino-acid polypeptide reads, in one-letter code: Delta-aminolevulinic acid dehydratase (323 aa).

C118, C120, and C128 together coordinate Zn(2+). The active-site Schiff-base intermediate with substrate is K195. Residues R205 and R217 each contribute to the 5-aminolevulinate site. Residue E233 coordinates Mg(2+). Catalysis depends on K248, which acts as the Schiff-base intermediate with substrate. 5-aminolevulinate is bound by residues S274 and Y313.

The protein belongs to the ALAD family. In terms of assembly, homooctamer. Requires Zn(2+) as cofactor.

It catalyses the reaction 2 5-aminolevulinate = porphobilinogen + 2 H2O + H(+). Its pathway is porphyrin-containing compound metabolism; protoporphyrin-IX biosynthesis; coproporphyrinogen-III from 5-aminolevulinate: step 1/4. In terms of biological role, catalyzes an early step in the biosynthesis of tetrapyrroles. Binds two molecules of 5-aminolevulinate per subunit, each at a distinct site, and catalyzes their condensation to form porphobilinogen. In Staphylococcus aureus, this protein is Delta-aminolevulinic acid dehydratase (hemB).